Reading from the N-terminus, the 582-residue chain is MARKRGISSLLLIYKQSFVIWGALLIFSPLLMFVGDSHGLQAKCLYCVAVMGSYWVFEALPLAITAFIPMILFPLFGIMRSEEVARAYLPDTCFLFMGGLMVALAVEKCELHARVALFVLKTVGSEPARVMAGFMGVTGFLSMWISNTATTALMVPILQSVITELVSNHRMEDLVALCEAHHNSSRKHSVGMRRLSLPNENNEIKREEMDTAMSPREQKMAKGLMLSVCFSANIGGAATITGTASNLVLVGQLNELFPGADTGVNFLSWLIFAFPMVFCCLIYCWCVLYLLYLRDAPKGSIIVTRKLQQKYNELHAFSFAEMAVIFCFALLLVLWILREPQVVPGWGEMFKDEFVSDATSAMFIVILLFTLPEKLPSSRGSSEQRKASSGLLDWATVQDRFPWSVLFLLGGGFALAAGVKESGLSHDIGAIMRYLDVFNHNIIMLICIIISVTLTNVCSNTVIASIFIPIVAELARSLEIDPLNFMLPVTISASFAFLLPVATPPNAIVFSSGYLKVFDMFVSGLCVTLGCVVLSMLNMLLWAGFVFNLHLFPQWAANPSPPLDVQDWAVENNITFVGTSKL.

Transmembrane regions (helical) follow at residues 17–37 (SFVIWGALLIFSPLLMFVGDS), 59–79 (ALPLAITAFIPMILFPLFGIM), 87–107 (AYLPDTCFLFMGGLMVALAVE), 130–150 (VMAGFMGVTGFLSMWISNTAT), 224–244 (LMLSVCFSANIGGAATITGTA), 271–291 (IFAFPMVFCCLIYCWCVLYLL), 317–337 (FSFAEMAVIFCFALLLVLWIL), 353–373 (EFVSDATSAMFIVILLFTLPE), 401–421 (FPWSVLFLLGGGFALAAGVKE), 455–475 (TNVCSNTVIASIFIPIVAELA), 482–502 (PLNFMLPVTISASFAFLLPVA), and 527–547 (VTLGCVVLSMLNMLLWAGFVF).

This sequence belongs to the SLC13A/DASS transporter (TC 2.A.47) family. NADC subfamily. Nad-1 and nad-2 are coexpressed in the intestinal tract from early larvae to adults, expression is from the pharynx through to the anus. Expression level is significantly greater in the anterior half of the intestine than in the posterior half.

Its subcellular location is the membrane. Low affinity sodium-dicarboxylate cotransporter that accepts a range of tricarboxylic acid-cycle intermediates with 4-5 carbon atoms. There is no interaction with monocarboxylates. The protein is Sodium-dependent low-affinity dicarboxylate transporter 1 (nac-1) of Caenorhabditis elegans.